The following is a 369-amino-acid chain: Ferredoxin--NADP reductase 2 (369 aa).

The disordered stretch occupies residues 1–21 (MDLSIPNPVADATRQVEGGSP). Residues Asp-58, Gln-66, Tyr-71, Val-111, Phe-146, Asp-311, and Thr-352 each contribute to the FAD site.

It belongs to the ferredoxin--NADP reductase type 2 family. Homodimer. The cofactor is FAD.

The enzyme catalyses 2 reduced [2Fe-2S]-[ferredoxin] + NADP(+) + H(+) = 2 oxidized [2Fe-2S]-[ferredoxin] + NADPH. The polypeptide is Ferredoxin--NADP reductase 2 (Cupriavidus taiwanensis (strain DSM 17343 / BCRC 17206 / CCUG 44338 / CIP 107171 / LMG 19424 / R1) (Ralstonia taiwanensis (strain LMG 19424))).